The following is a 623-amino-acid chain: Probable lysophospholipase 5 (623 aa).

An N-terminal signal peptide occupies residues 1–19 (MKLSSFGLFLALQLLPALG). One can recognise a PLA2c domain in the interval 67–607 (ACPSGSLLRP…NQYCWNGTIA (541 aa)). 19 N-linked (GlcNAc...) asparagine glycosylation sites follow: asparagine 118, asparagine 153, asparagine 187, asparagine 232, asparagine 256, asparagine 264, asparagine 293, asparagine 331, asparagine 360, asparagine 367, asparagine 400, asparagine 403, asparagine 474, asparagine 508, asparagine 513, asparagine 537, asparagine 564, asparagine 586, and asparagine 603.

It belongs to the lysophospholipase family.

The protein resides in the secreted. The catalysed reaction is a 1-acyl-sn-glycero-3-phosphocholine + H2O = sn-glycerol 3-phosphocholine + a fatty acid + H(+). In terms of biological role, catalyzes the release of fatty acids from lysophospholipids. This is Probable lysophospholipase 5 (plb5) from Schizosaccharomyces pombe (strain 972 / ATCC 24843) (Fission yeast).